Here is a 245-residue protein sequence, read N- to C-terminus: Eukaryotic translation initiation factor 6 (245 aa).

Phosphoserine; by CK1 occurs at positions 174 and 175. A Phosphoserine modification is found at Ser-231.

It belongs to the eIF-6 family. In terms of assembly, monomer. Associates with the 60S ribosomal subunit. In terms of processing, phosphorylation at Ser-174 and Ser-175 promotes nuclear export.

It localises to the cytoplasm. The protein localises to the nucleus. Its subcellular location is the nucleolus. In terms of biological role, binds to the 60S ribosomal subunit and prevents its association with the 40S ribosomal subunit to form the 80S initiation complex in the cytoplasm. Is also involved in ribosome biogenesis. Associates with pre-60S subunits in the nucleus and is involved in its nuclear export. Cytoplasmic release of TIF6 from 60S subunits and nuclear relocalization is promoted by the GTPase RIA1/EFL1 and by SDO1. Also required for pre-rRNA processing. The protein is Eukaryotic translation initiation factor 6 of Saccharomyces cerevisiae (strain ATCC 204508 / S288c) (Baker's yeast).